Consider the following 79-residue polypeptide: Protein RALF-like 35 (79 aa).

A signal peptide spans 1–29; the sequence is MAAHKMSLTSLFFVSIVIVLSLFSGFGEG. 2 cysteine pairs are disulfide-bonded: cysteine 45–cysteine 52 and cysteine 66–cysteine 72. Asparagine 68 is a glycosylation site (N-linked (GlcNAc...) asparagine).

The protein belongs to the plant rapid alkalinization factor (RALF) family.

It is found in the secreted. Functionally, cell signaling peptide that may regulate plant stress, growth, and development. Mediates a rapid alkalinization of extracellular space by mediating a transient increase in the cytoplasmic Ca(2+) concentration leading to a calcium-dependent signaling events through a cell surface receptor and a concomitant activation of some intracellular mitogen-activated protein kinases. In Arabidopsis thaliana (Mouse-ear cress), this protein is Protein RALF-like 35.